We begin with the raw amino-acid sequence, 200 residues long: Peptidyl-tRNA hydrolase (200 aa).

Position 15 (Tyr15) interacts with tRNA. The active-site Proton acceptor is His20. Residues Tyr66, Asn68, and Asn114 each contribute to the tRNA site.

The protein belongs to the PTH family. Monomer.

The protein localises to the cytoplasm. It carries out the reaction an N-acyl-L-alpha-aminoacyl-tRNA + H2O = an N-acyl-L-amino acid + a tRNA + H(+). Functionally, hydrolyzes ribosome-free peptidyl-tRNAs (with 1 or more amino acids incorporated), which drop off the ribosome during protein synthesis, or as a result of ribosome stalling. Catalyzes the release of premature peptidyl moieties from peptidyl-tRNA molecules trapped in stalled 50S ribosomal subunits, and thus maintains levels of free tRNAs and 50S ribosomes. The chain is Peptidyl-tRNA hydrolase from Paraburkholderia phymatum (strain DSM 17167 / CIP 108236 / LMG 21445 / STM815) (Burkholderia phymatum).